Reading from the N-terminus, the 309-residue chain is Porphobilinogen deaminase (309 aa).

Cys242 is modified (S-(dipyrrolylmethanemethyl)cysteine).

Belongs to the HMBS family. Monomer. Dipyrromethane is required as a cofactor.

The catalysed reaction is 4 porphobilinogen + H2O = hydroxymethylbilane + 4 NH4(+). It functions in the pathway porphyrin-containing compound metabolism; protoporphyrin-IX biosynthesis; coproporphyrinogen-III from 5-aminolevulinate: step 2/4. Functionally, tetrapolymerization of the monopyrrole PBG into the hydroxymethylbilane pre-uroporphyrinogen in several discrete steps. The sequence is that of Porphobilinogen deaminase from Hamiltonella defensa subsp. Acyrthosiphon pisum (strain 5AT).